We begin with the raw amino-acid sequence, 995 residues long: Endosome/lysosome-associated apoptosis and autophagy regulator family member 2 (995 aa).

An N-terminal signal peptide occupies residues Met1–Ala21. Topologically, residues Leu22–Lys895 are extracellular. Residues Asn24, Asn136, Asn245, Asn372, Asn527, Asn649, Asn683, Asn700, and Asn758 are each glycosylated (N-linked (GlcNAc...) asparagine). The MRH domain maps to Ser639–Leu843. Disulfide bonds link Cys641–Cys687 and Cys697–Cys725. 2 disulfides stabilise this stretch: Cys793–Cys829 and Cys805–Cys841. N-linked (GlcNAc...) asparagine glycosylation is present at Asn883. A helical membrane pass occupies residues Val896–Trp916. Over Lys917–Ile995 the chain is Cytoplasmic.

It belongs to the ELAPOR family. In terms of tissue distribution, expressed in the animal half of the embryo during gastrulation, becoming restricted to the ventral ectoderm at stage 12.5. At the neurula stage, expressed in the anterior ectoderm surrounding the neural plate, and weakly in the epidermis. Expression is especially high in the presumptive hatching gland and cement gland regions. Surprisingly, by the tailbud stage (stage 22), expression is limited to the hatching gland and is not seen in the cement gland. Conversely, in tadpoles expressed broadly in the head, heart and fin. Expression in the head is seen in the primary mouth and in the brain, eyes, otic vesicles and olfactory pits.

Its subcellular location is the cell membrane. Functionally, functions as a regulator of the BMP signaling pathway and is involved in epidermal differentiation. This Xenopus laevis (African clawed frog) protein is Endosome/lysosome-associated apoptosis and autophagy regulator family member 2 (elapor2).